A 345-amino-acid polypeptide reads, in one-letter code: Guanine nucleotide-binding protein alpha-4 subunit (345 aa).

The G-alpha domain occupies 30–345 (KDVKLLLLGP…TILSQALEHF (316 aa)). The interval 33-46 (KLLLLGPGESGKST) is G1 motif. GTP is bound by residues 38–45 (GPGESGKS), 171–177 (LRCRVRT), 196–200 (DVGGQ), 265–268 (NKKD), and alanine 320. Residues serine 45 and threonine 177 each coordinate Mg(2+). The tract at residues 169–177 (DVLRCRVRT) is G2 motif. A G3 motif region spans residues 192-201 (LKIVDVGGQR). A G4 motif region spans residues 261–268 (VLFLNKKD). The G5 motif stretch occupies residues 318 to 323 (TCAVDT).

This sequence belongs to the G-alpha family. G proteins are composed of 3 units; alpha, beta and gamma. The alpha chain contains the guanine nucleotide binding site.

In terms of biological role, guanine nucleotide-binding proteins (G proteins) are involved as modulators or transducers in various transmembrane signaling systems. G alpha-4 plays a role in morphogenesis of the multicellular structure. The chain is Guanine nucleotide-binding protein alpha-4 subunit (gpaD) from Dictyostelium discoideum (Social amoeba).